The following is a 320-amino-acid chain: Fructose-1,6-bisphosphatase class 1 (320 aa).

The Mg(2+) site is built by Glu-93, Asp-114, Leu-116, and Asp-117. Substrate contacts are provided by residues 117-120, Tyr-225, and Lys-256; that span reads DGSS. Residue Glu-262 participates in Mg(2+) binding.

It belongs to the FBPase class 1 family. Homotetramer. It depends on Mg(2+) as a cofactor.

The protein resides in the cytoplasm. It catalyses the reaction beta-D-fructose 1,6-bisphosphate + H2O = beta-D-fructose 6-phosphate + phosphate. It participates in carbohydrate biosynthesis; gluconeogenesis. In Syntrophotalea carbinolica (strain DSM 2380 / NBRC 103641 / GraBd1) (Pelobacter carbinolicus), this protein is Fructose-1,6-bisphosphatase class 1.